A 141-amino-acid chain; its full sequence is Large ribosomal subunit protein uL11 (141 aa).

This sequence belongs to the universal ribosomal protein uL11 family. As to quaternary structure, part of the ribosomal stalk of the 50S ribosomal subunit. Interacts with L10 and the large rRNA to form the base of the stalk. L10 forms an elongated spine to which L12 dimers bind in a sequential fashion forming a multimeric L10(L12)X complex. Post-translationally, one or more lysine residues are methylated.

In terms of biological role, forms part of the ribosomal stalk which helps the ribosome interact with GTP-bound translation factors. The chain is Large ribosomal subunit protein uL11 from Prochlorococcus marinus (strain MIT 9515).